A 522-amino-acid chain; its full sequence is 2-isopropylmalate synthase (522 aa).

One can recognise a Pyruvate carboxyltransferase domain in the interval 5-267; it reads VIIFDTTLRD…ETGINAKEIH (263 aa). Positions 14, 202, 204, and 238 each coordinate Mn(2+). The tract at residues 392–522 is regulatory domain; sequence QLQQLVVQSD…MQKNRELGGV (131 aa).

It belongs to the alpha-IPM synthase/homocitrate synthase family. LeuA type 1 subfamily. In terms of assembly, homodimer. Mn(2+) serves as cofactor.

The protein resides in the cytoplasm. The enzyme catalyses 3-methyl-2-oxobutanoate + acetyl-CoA + H2O = (2S)-2-isopropylmalate + CoA + H(+). It participates in amino-acid biosynthesis; L-leucine biosynthesis; L-leucine from 3-methyl-2-oxobutanoate: step 1/4. Its function is as follows. Catalyzes the condensation of the acetyl group of acetyl-CoA with 3-methyl-2-oxobutanoate (2-ketoisovalerate) to form 3-carboxy-3-hydroxy-4-methylpentanoate (2-isopropylmalate). This Shewanella putrefaciens (strain CN-32 / ATCC BAA-453) protein is 2-isopropylmalate synthase.